Reading from the N-terminus, the 231-residue chain is Sugar fermentation stimulation protein homolog (231 aa).

The protein belongs to the SfsA family.

The chain is Sugar fermentation stimulation protein homolog from Geobacter sp. (strain M21).